A 599-amino-acid polypeptide reads, in one-letter code: MFS-type transporter ucsM (599 aa).

Basic and acidic residues predominate over residues 23–34 (AHHHGKEREAHR). A disordered region spans residues 23–42 (AHHHGKEREAHRQSLSSVPG). The next 8 membrane-spanning stretches (helical) occupy residues 147–167 (VALG…GAWL), 178–198 (ILIG…GAVP), 204–224 (GKGT…AGLF), 263–283 (IMLI…ATVY), 291–311 (WLAF…LWYL), 386–406 (IFLY…ILPS), 424–444 (FNPI…YPAL), and 454–474 (ISRI…SSLV). Asn-517 is a glycosylation site (N-linked (GlcNAc...) asparagine). The next 2 helical transmembrane spans lie at 539–559 (LFLF…PAIV) and 563–583 (LVWV…IFWV).

This sequence belongs to the major facilitator superfamily. Proton-dependent oligopeptide transporter (POT/PTR) (TC 2.A.17) family.

The protein localises to the membrane. In terms of biological role, MFS-type transporter; part of the gene cluster that mediates the biosynthesis of UCS1025A, a member of the pyrrolizidinone family that acts as a strong telomerase inhibitor and displays potent antibacterial and antitumor properties. These compounds share a hemiaminal-containing pyrrolizidinone core fused with a gamma-lactone, giving a furopyrrolizidine that is connected to a decalin fragment. The protein is MFS-type transporter ucsM of Acremonium sp.